The chain runs to 432 residues: Non-peptidase homolog YmxG (432 aa).

Residues 1–20 (MKKFLITLLLGVFMGLQASA) form the signal peptide.

This sequence belongs to the peptidase M16 family.

It localises to the secreted. In terms of biological role, may contribute to the full activity of the protease PqqE. The protein is Non-peptidase homolog YmxG of Helicobacter pylori (strain ATCC 700392 / 26695) (Campylobacter pylori).